We begin with the raw amino-acid sequence, 187 residues long: Peptidyl-tRNA hydrolase (187 aa).

Residue phenylalanine 14 participates in tRNA binding. Histidine 19 acts as the Proton acceptor in catalysis. Residues tyrosine 64, asparagine 66, and asparagine 112 each contribute to the tRNA site.

Belongs to the PTH family. Monomer.

It is found in the cytoplasm. The enzyme catalyses an N-acyl-L-alpha-aminoacyl-tRNA + H2O = an N-acyl-L-amino acid + a tRNA + H(+). Its function is as follows. Hydrolyzes ribosome-free peptidyl-tRNAs (with 1 or more amino acids incorporated), which drop off the ribosome during protein synthesis, or as a result of ribosome stalling. In terms of biological role, catalyzes the release of premature peptidyl moieties from peptidyl-tRNA molecules trapped in stalled 50S ribosomal subunits, and thus maintains levels of free tRNAs and 50S ribosomes. The sequence is that of Peptidyl-tRNA hydrolase from Oceanobacillus iheyensis (strain DSM 14371 / CIP 107618 / JCM 11309 / KCTC 3954 / HTE831).